A 512-amino-acid polypeptide reads, in one-letter code: MSEIREARLQKANSLVSKGFASYAESFSVSHTTKFLIQKFDYLENGQEEDFSVSLAGRVMAKRVMGKIAFFTISDQEGQIQLYLDKRMINCNLENQKLLSFEDIKEIVDIGDWIGVYGTIKKTNKGELSIKVEKWEMLSKSLQPLPDKWHGLTDIEKRYRQRYLDLIVNPHSKNVFKTRAKCISFIRQWLDNRNFLEIETPILQSEAGGAEARPFITHHNTLDIPLYLRIATELHLKRMVVGGFEKVYELGRIFRNEGISTKHNPEFTSVEIYQAFSNYVDMMNLTEELIKDIVFNVCGSLVINYQNKEIDFSKPWSRISMKDIVKKYTGIDFDSFSGDFQSAKQAVKSINVEFSNKVNSMGRLLNEVFEQKVESELIEPTFVIDYPVEISPLARPHLDNKEMVQRFELFIVGRELANAFSELIDPVDQRERMQLQQSLRDEGDHEAHCIDEDFLNALEIGMPPTGGLGIGIDRLIMLITNSPSIRDVIPFPLLKPEITSNKNEKLPLNEVK.

The Mg(2+) site is built by E408 and E415.

It belongs to the class-II aminoacyl-tRNA synthetase family. Homodimer. Requires Mg(2+) as cofactor.

It is found in the cytoplasm. It catalyses the reaction tRNA(Lys) + L-lysine + ATP = L-lysyl-tRNA(Lys) + AMP + diphosphate. The polypeptide is Lysine--tRNA ligase (Prochlorococcus marinus (strain MIT 9312)).